The following is an 83-amino-acid chain: Delta-conotoxin-like Ac6.1 (83 aa).

The N-terminal stretch at 1 to 22 (MKLTCVVIVAVLFLTAWTFVMA) is a signal peptide. A propeptide spanning residues 23-51 (DDSRYGLKDLFPKARHEMKNPEASKLNKR) is cleaved from the precursor. Cystine bridges form between cysteine 54–cysteine 69, cysteine 61–cysteine 73, and cysteine 68–cysteine 78. 4-hydroxyproline occurs at positions 57 and 65.

The protein belongs to the conotoxin O1 superfamily. Expressed by the venom duct.

The protein localises to the secreted. In terms of biological role, delta-conotoxins bind to site 6 of voltage-gated sodium channels (Nav) and inhibit the inactivation process. The chain is Delta-conotoxin-like Ac6.1 from Conus achatinus (Little frog cone).